The following is a 704-amino-acid chain: Boron transporter 1 (704 aa).

Residues 1 to 35 are Cytoplasmic-facing; that stretch reads MEETFVPFEGIKNDLKGRLMCYKQDWTGGFKAGFR. Residues 36–56 traverse the membrane as a helical segment; it reads ILAPTTYIFFASAIPVISFGE. The Extracellular portion of the chain corresponds to 57–75; that stretch reads QLERSTDGVLTAVQTLAST. A helical transmembrane segment spans residues 76 to 96; that stretch reads AICGMIHSIIGGQPLLILGVA. Residues 97 to 120 lie on the Cytoplasmic side of the membrane; it reads EPTVIMYTFMFNFAKARPELGRDL. Residues 121-141 traverse the membrane as a helical segment; the sequence is FLAWSGWVCVWTALMLFVLAI. Residues 142–155 lie on the Extracellular side of the membrane; it reads CGACSIINRFTRVA. A helical membrane pass occupies residues 156–176; sequence GELFGLLIAMLFMQQAIKGLV. Over 177–195 the chain is Cytoplasmic; the sequence is DEFRIPERENQKLKEFLPS. The helical transmembrane segment at 196–216 threads the bilayer; the sequence is WRFANGMFALVLSFGLLLTGL. The Extracellular portion of the chain corresponds to 217–233; it reads RSRKARSWRYGTGWLRS. A helical membrane pass occupies residues 234-254; the sequence is LIADYGVPLMVLVWTGVSYIP. The Cytoplasmic segment spans residues 255–289; that stretch reads AGDVPKGIPRRLFSPNPWSPGAYGNWTVVKEMLDV. The helical transmembrane segment at 290–310 threads the bilayer; that stretch reads PIVYIIGAFIPASMIAVLYYF. Topologically, residues 311-337 are extracellular; it reads DHSVASQLAQQKEFNLRKPSSYHYDLL. A helical transmembrane segment spans residues 338 to 358; that stretch reads LLGFLTLMCGLLGVPPSNGVI. At 359–480 the chain is on the cytoplasmic side; the sequence is PQSPMHTKSL…STMVGGCVAA (122 aa). The chain crosses the membrane as a helical span at residues 481–501; that stretch reads MPILKMIPTSVLWGYFAFMAI. At 502 to 557 the chain is on the extracellular side; sequence ESLPGNQFWERILLLFTAPSRRFKVLEDYHATFVETVPFKTIAMFTLFQTTYLLIC. Residues 558 to 578 form a helical membrane-spanning segment; it reads FGLTWIPIAGVMFPLMIMFLI. The Cytoplasmic segment spans residues 579-704; the sequence is PVRQYLLPRF…RSPLNQSSSN (126 aa). The segment at 641–704 is disordered; sequence EFRHTSSPKV…RSPLNQSSSN (64 aa). The span at 647-664 shows a compositional bias: low complexity; that stretch reads SPKVTSSSSTPVNNRSLS.

It belongs to the anion exchanger (TC 2.A.31.3) family. In terms of tissue distribution, expressed in proximal side of various root cells, notably in the columella, lateral root cap, epidermis and endodermis in tip and elongation zones of the root. Also detected in the epidermis, cortex, endodermis, and stele cells of the root hair zone. Observed in cotyledons and hypocotyls.

It localises to the cell membrane. The protein localises to the endosome membrane. The protein resides in the vacuole membrane. In terms of biological role, efflux-type boron (B) transporter for xylem loading, responsive of boron translocation from roots to shoots under boron limitation. Boron is essential for maintaining the integrity of plants cell walls. This Arabidopsis thaliana (Mouse-ear cress) protein is Boron transporter 1.